The primary structure comprises 634 residues: DNA-directed RNA polymerase subunit gamma (634 aa).

Cysteine 74, cysteine 76, cysteine 89, and cysteine 92 together coordinate Zn(2+). Mg(2+) contacts are provided by aspartate 471, aspartate 473, and aspartate 475.

It belongs to the RNA polymerase beta' chain family. RpoC1 subfamily. In cyanobacteria the RNAP catalytic core is composed of 2 alpha, 1 beta, 1 beta', 1 gamma and 1 omega subunit. When a sigma factor is associated with the core the holoenzyme is formed, which can initiate transcription. It depends on Mg(2+) as a cofactor. Requires Zn(2+) as cofactor.

The catalysed reaction is RNA(n) + a ribonucleoside 5'-triphosphate = RNA(n+1) + diphosphate. Its function is as follows. DNA-dependent RNA polymerase catalyzes the transcription of DNA into RNA using the four ribonucleoside triphosphates as substrates. This chain is DNA-directed RNA polymerase subunit gamma, found in Synechococcus sp. (strain CC9311).